A 398-amino-acid polypeptide reads, in one-letter code: Cytochrome b (398 aa).

4 helical membrane-spanning segments follow: residues 38 to 58, 82 to 104, 119 to 139, and 185 to 205; these read FGSLAGICLVIQIVTGVFLAM, WLLRYMHANGASMFFIVVYLHIF, VWCLGVVIFLLMIVTAFIGYV, and FFSLHYLLPFILVGASLLHLA. Residues His-88 and His-102 each coordinate heme b. Residues His-189 and His-203 each contribute to the heme b site. An a ubiquinone-binding site is contributed by His-208. A run of 4 helical transmembrane segments spans residues 231 to 251, 295 to 315, 327 to 347, and 354 to 373; these read FYVKDLVGWVAFAIFFSIWIF, AGGVAAIALVFISLLALPFFK, IYQGIFWLLLADCLLLGWIGC, and FVTIGQISSVFFFLFFAITP.

This sequence belongs to the cytochrome b family. The main subunits of complex b-c1 are: cytochrome b, cytochrome c1 and the Rieske protein. It depends on heme b as a cofactor.

It localises to the mitochondrion inner membrane. In terms of biological role, component of the ubiquinol-cytochrome c reductase complex (complex III or cytochrome b-c1 complex) that is part of the mitochondrial respiratory chain. The b-c1 complex mediates electron transfer from ubiquinol to cytochrome c. Contributes to the generation of a proton gradient across the mitochondrial membrane that is then used for ATP synthesis. This Triticum aestivum (Wheat) protein is Cytochrome b (MT-CYB).